The following is a 690-amino-acid chain: Glycine--tRNA ligase beta subunit (690 aa).

This sequence belongs to the class-II aminoacyl-tRNA synthetase family. In terms of assembly, tetramer of two alpha and two beta subunits.

It localises to the cytoplasm. The enzyme catalyses tRNA(Gly) + glycine + ATP = glycyl-tRNA(Gly) + AMP + diphosphate. The polypeptide is Glycine--tRNA ligase beta subunit (Desulfitobacterium hafniense (strain DSM 10664 / DCB-2)).